Consider the following 291-residue polypeptide: m-AAA protease-interacting protein 1, mitochondrial (291 aa).

The transit peptide at 1–96 directs the protein to the mitochondrion; the sequence is MALAVRLLPR…TFPSCPRRTY (96 aa).

In terms of assembly, interacts with AFG3L2. Interacts with SPG7. Interacts with SMDT1/EMRE (via the N-terminal transit peptide); interaction is direct and takes place before maturation of SMDT1/EMRE.

The protein localises to the mitochondrion matrix. Promotes sorting of SMDT1/EMRE in mitochondria by ensuring its maturation. Interacts with the transit peptide region of SMDT1/EMRE precursor protein in the mitochondrial matrix, leading to protect it against protein degradation by YME1L1, thereby ensuring SMDT1/EMRE maturation by the mitochondrial processing peptidase (PMPCA and PMPCB). The sequence is that of m-AAA protease-interacting protein 1, mitochondrial from Bos taurus (Bovine).